The primary structure comprises 425 residues: Enolase (425 aa).

Residue Gln-163 coordinates (2R)-2-phosphoglycerate. Glu-205 acts as the Proton donor in catalysis. Residues Asp-242, Glu-286, and Asp-313 each coordinate Mg(2+). Residues Lys-338, Arg-367, Ser-368, and Lys-389 each contribute to the (2R)-2-phosphoglycerate site. The Proton acceptor role is filled by Lys-338.

Belongs to the enolase family. Mg(2+) serves as cofactor.

It is found in the cytoplasm. It localises to the secreted. Its subcellular location is the cell surface. The catalysed reaction is (2R)-2-phosphoglycerate = phosphoenolpyruvate + H2O. It functions in the pathway carbohydrate degradation; glycolysis; pyruvate from D-glyceraldehyde 3-phosphate: step 4/5. Its function is as follows. Catalyzes the reversible conversion of 2-phosphoglycerate (2-PG) into phosphoenolpyruvate (PEP). It is essential for the degradation of carbohydrates via glycolysis. The polypeptide is Enolase (Helicobacter hepaticus (strain ATCC 51449 / 3B1)).